The chain runs to 82 residues: ATP synthase subunit c, chloroplastic (82 aa).

2 helical membrane passes run 4-24 and 57-77; these read IISAASVIAAGLSVGLAAIGP and LAFMEALTIYGLVVALSLLFA.

It belongs to the ATPase C chain family. As to quaternary structure, F-type ATPases have 2 components, F(1) - the catalytic core - and F(0) - the membrane proton channel. F(1) has five subunits: alpha(3), beta(3), gamma(1), delta(1), epsilon(1). F(0) has four main subunits: a(1), b(1), b'(1) and c(10-14). The alpha and beta chains form an alternating ring which encloses part of the gamma chain. F(1) is attached to F(0) by a central stalk formed by the gamma and epsilon chains, while a peripheral stalk is formed by the delta, b and b' chains.

It is found in the plastid. The protein resides in the chloroplast thylakoid membrane. Functionally, f(1)F(0) ATP synthase produces ATP from ADP in the presence of a proton or sodium gradient. F-type ATPases consist of two structural domains, F(1) containing the extramembraneous catalytic core and F(0) containing the membrane proton channel, linked together by a central stalk and a peripheral stalk. During catalysis, ATP synthesis in the catalytic domain of F(1) is coupled via a rotary mechanism of the central stalk subunits to proton translocation. Its function is as follows. Key component of the F(0) channel; it plays a direct role in translocation across the membrane. A homomeric c-ring of between 10-14 subunits forms the central stalk rotor element with the F(1) delta and epsilon subunits. The polypeptide is ATP synthase subunit c, chloroplastic (Heterosigma akashiwo (strain NIES-293 / 8280G21-1)).